A 312-amino-acid chain; its full sequence is Ribosomal RNA small subunit methyltransferase H (312 aa).

Residues 33-35 (AGH), D52, F79, D100, and Q107 contribute to the S-adenosyl-L-methionine site.

It belongs to the methyltransferase superfamily. RsmH family.

The protein localises to the cytoplasm. The enzyme catalyses cytidine(1402) in 16S rRNA + S-adenosyl-L-methionine = N(4)-methylcytidine(1402) in 16S rRNA + S-adenosyl-L-homocysteine + H(+). In terms of biological role, specifically methylates the N4 position of cytidine in position 1402 (C1402) of 16S rRNA. The chain is Ribosomal RNA small subunit methyltransferase H from Finegoldia magna (strain ATCC 29328 / DSM 20472 / WAL 2508) (Peptostreptococcus magnus).